Consider the following 911-residue polypeptide: Isoleucine--tRNA ligase (911 aa).

Residues 57–67 (PYANGDIHMGH) carry the 'HIGH' region motif. Glu551 lines the L-isoleucyl-5'-AMP pocket. The 'KMSKS' region signature appears at 592 to 596 (KMSKS). Lys595 is an ATP binding site. Cys881, Cys884, Cys901, and Cys904 together coordinate Zn(2+).

Belongs to the class-I aminoacyl-tRNA synthetase family. IleS type 1 subfamily. As to quaternary structure, monomer. Requires Zn(2+) as cofactor.

It is found in the cytoplasm. It carries out the reaction tRNA(Ile) + L-isoleucine + ATP = L-isoleucyl-tRNA(Ile) + AMP + diphosphate. In terms of biological role, catalyzes the attachment of isoleucine to tRNA(Ile). As IleRS can inadvertently accommodate and process structurally similar amino acids such as valine, to avoid such errors it has two additional distinct tRNA(Ile)-dependent editing activities. One activity is designated as 'pretransfer' editing and involves the hydrolysis of activated Val-AMP. The other activity is designated 'posttransfer' editing and involves deacylation of mischarged Val-tRNA(Ile). The polypeptide is Isoleucine--tRNA ligase (Exiguobacterium sibiricum (strain DSM 17290 / CCUG 55495 / CIP 109462 / JCM 13490 / 255-15)).